Here is a 315-residue protein sequence, read N- to C-terminus: Methionyl-tRNA formyltransferase (315 aa).

113-116 (SILP) provides a ligand contact to (6S)-5,6,7,8-tetrahydrofolate.

It belongs to the Fmt family.

It catalyses the reaction L-methionyl-tRNA(fMet) + (6R)-10-formyltetrahydrofolate = N-formyl-L-methionyl-tRNA(fMet) + (6S)-5,6,7,8-tetrahydrofolate + H(+). In terms of biological role, attaches a formyl group to the free amino group of methionyl-tRNA(fMet). The formyl group appears to play a dual role in the initiator identity of N-formylmethionyl-tRNA by promoting its recognition by IF2 and preventing the misappropriation of this tRNA by the elongation apparatus. The sequence is that of Methionyl-tRNA formyltransferase from Aliivibrio fischeri (strain ATCC 700601 / ES114) (Vibrio fischeri).